A 2822-amino-acid chain; its full sequence is Piezo-type mechanosensitive ion channel component 2 (2822 aa).

Residues 1 to 12 are Cytoplasmic-facing; sequence MASEVVCGLIFR. Residues 13-24 traverse the membrane as a helical segment; the sequence is LLLPICLAVACA. Residues 25–30 lie on the Extracellular side of the membrane; the sequence is FRYNGL. A helical membrane pass occupies residues 31-43; sequence SFVYLIYLLLIPL. Topologically, residues 44 to 50 are cytoplasmic; that stretch reads FSEPTKA. Residues 51–76 traverse the membrane as a helical segment; sequence TMQGHTGRLLQSLCITSLSFLLLHII. Residues 77-122 lie on the Extracellular side of the membrane; sequence FHITLASLEAQHRITPAYNCSTWEKTFRQIGFESLKGADAGNGIRV. Residue Asn-95 is glycosylated (N-linked (GlcNAc...) asparagine). The chain crosses the membrane as a helical span at residues 123-141; the sequence is FVPDIGMFIASLTIWLVCR. Over 142 to 221 the chain is Cytoplasmic; it reads TIVKKPDTEE…KEFIGNMITT (80 aa). Residues 222 to 237 traverse the membrane as a helical segment; it reads AGKVVVTILLGSSGMM. At 238 to 240 the chain is on the extracellular side; it reads LPS. Residues 241–258 form a helical membrane-spanning segment; the sequence is LTSAVYFFVFLGLCTWWS. Residues 259–264 lie on the Cytoplasmic side of the membrane; sequence WCRTFD. The chain crosses the membrane as a helical span at residues 265-287; it reads PLLFGCLCVLLAIFTAGHLIGLY. Residues 288–335 are Extracellular-facing; the sequence is LYQFQFFQEAVPPNDYYARLFGIKSVIQTDCASTWKIIVNPDLSWYHH. The helical transmembrane segment at 336–355 threads the bilayer; sequence ANPILLLVMYYTLATLIRIW. Residues 356–492 are Cytoplasmic-facing; sequence LQEPLVQEEM…SVRMHAMVAV (137 aa). The tract at residues 450–481 is disordered; sequence YRWEPSEESSEKKEEEEDKREDSEGEGSQEEK. The stretch at 455–482 forms a coiled coil; the sequence is SEESSEKKEEEEDKREDSEGEGSQEEKR. Residues 463–477 show a composition bias toward acidic residues; that stretch reads EEEEDKREDSEGEGS. Residues 493 to 514 traverse the membrane as a helical segment; that stretch reads FQFIMKQSYICALIAMMAWSIT. Over 515–519 the chain is Extracellular; that stretch reads YHSWL. A helical transmembrane segment spans residues 520–531; that stretch reads TFVLLIWSCTLW. At 532–535 the chain is on the cytoplasmic side; it reads MIRN. A helical transmembrane segment spans residues 536-562; that stretch reads RRKYAMISSPFMVVYANLLLVLQYIWS. At 563-583 the chain is on the extracellular side; the sequence is FELPEIKKVPGFLEKKEPGEL. The helical transmembrane segment at 584 to 614 threads the bilayer; it reads ASKILFTITFWLLLRQHLTEQKALREKEALL. The Cytoplasmic portion of the chain corresponds to 615-689; sequence SEVKIGSQEL…GNLVVALFIK (75 aa). Acidic residues-rich tracts occupy residues 624–633 and 643–652; these read LEEKEDEELQ and EKEEEEEEEI. Positions 624-668 are disordered; sequence LEEKEDEELQDVQVEGEPTEKEEEEEEEIKEERHEVKKEEEEEVE. Residues 653 to 662 are compositionally biased toward basic and acidic residues; the sequence is KEERHEVKKE. The chain crosses the membrane as a helical span at residues 690 to 703; it reads YWIYVCGGMFFFVS. At 704-709 the chain is on the extracellular side; that stretch reads FEGKIV. The helical transmembrane segment at 710–728 threads the bilayer; sequence MYKIIYMVLFLFCVALYQV. Over 729-737 the chain is Cytoplasmic; it reads HYEWWRKIL. Residues 738–757 form a helical membrane-spanning segment; the sequence is KYFWMSVVIYTMLVLIFIYT. The Extracellular portion of the chain corresponds to 758–789; sequence YQFENFPGLWQNMTGLKKEKLEDLGLKQFTVA. Residues 790-811 form a helical membrane-spanning segment; sequence ELFTRIFIPTSFLLVCILHLHY. Over 812–957 the chain is Cytoplasmic; that stretch reads FHDRFLELTD…QVFMWWILEL (146 aa). At Ser-856 the chain carries Phosphoserine. The segment covering 875 to 901 has biased composition (basic and acidic residues); that stretch reads QKLAESGEERPEECVKKTEKGEAGKDS. Positions 875-919 are disordered; sequence QKLAESGEERPEECVKKTEKGEAGKDSDESEEEEDEEEESEEEES. The segment covering 902–919 has biased composition (acidic residues); sequence DESEEEEDEEEESEEEES. Residues 958-973 form a helical membrane-spanning segment; the sequence is HIIKIVSSYIIWVTVK. Residues 974-979 lie on the Extracellular side of the membrane; sequence EVSLFN. A helical membrane pass occupies residues 980-989; the sequence is YVFLISWAFA. The Cytoplasmic segment spans residues 990–997; the sequence is LPYAKLRR. A helical transmembrane segment spans residues 998–1018; it reads AASSVCTVWTCVIIVCKMLYQ. The Extracellular portion of the chain corresponds to 1019 to 1074; sequence LQTIKPENFSVNCSLPNENQTNIPLHELNKSLLYSAPVDPTEWVGLRKSSPLLVYL. A glycan (N-linked (GlcNAc...) asparagine) is linked at Asn-1030. Cys-1031 and Cys-1209 are joined by a disulfide. The chain crosses the membrane as a helical span at residues 1075–1099; that stretch reads RNNLLMLAILAFEVTVYRHQEYYRG. The Cytoplasmic segment spans residues 1100–1140; the sequence is RNNLTAPVSKTIFHDITRLHLDDGLINCAKYFVNYFFYKFG. The chain crosses the membrane as a helical span at residues 1141–1155; the sequence is LETCFLMSVNVIGQR. Residues 1156–1157 are Extracellular-facing; it reads MD. Residues 1158 to 1171 form a helical membrane-spanning segment; the sequence is FYAMIHACWLIGVL. The Cytoplasmic portion of the chain corresponds to 1172–1182; sequence YRRRRKAIAEV. The helical transmembrane segment at 1183 to 1202 threads the bilayer; sequence WPKYCCFLACIITFQYFVCI. Residues 1203 to 1239 are Extracellular-facing; it reads GIPPAPCRDYPWRFKGAYFNDNIIKWLYFPDFIVRPN. The chain crosses the membrane as a helical span at residues 1240-1260; that stretch reads PVFLVYDFMLLLCASLQRQIF. Over 1261-1314 the chain is Cytoplasmic; the sequence is EDENKAAVRIMAGDNVEICMNLDAASFSQHNPVPDFIHCRSYLDMSKVIIFSYL. The chain crosses the membrane as a helical span at residues 1315–1327; it reads FWFVLTIIFITGT. The Extracellular segment spans residues 1328–1333; sequence TRISIF. Residues 1334–1346 form a helical membrane-spanning segment; the sequence is CMGYLVACFYFLL. Residues 1347-1355 lie on the Cytoplasmic side of the membrane; sequence FGGDLLLKP. The chain crosses the membrane as a helical span at residues 1356–1381; sequence IKSILRYWDWLIAYNVFVITMKNILS. Residues 1382–1430 lie on the Extracellular side of the membrane; the sequence is IGACGYIGALVRNSCWLIQAFSLACTVKGYQMPEDDSRCKLPSGEAGII. The chain crosses the membrane as a helical span at residues 1431-1447; the sequence is WDSICFAFLLLQRRVFM. Residues 1448–1991 lie on the Cytoplasmic side of the membrane; sequence SYYFLHVVAD…YAMYNTLVAR (544 aa). Positions 1475-1515 form a coiled coil; sequence TIVKAVKARIEEEKKSMDQLKRQMDRIKARQQKYKKGKERM. Disordered stretches follow at residues 1505–1551 and 1611–1653; these read QQKY…KKKQ and LRQR…KKSD. The segment covering 1611-1621 has biased composition (basic residues); the sequence is LRQRRKEKKKL. Over residues 1622-1633 the composition is skewed to basic and acidic residues; it reads AREEQKERRKGS. The helical transmembrane segment at 1992-2006 threads the bilayer; the sequence is SEMVCYFVIILNHMT. The Extracellular segment spans residues 2007–2013; the sequence is SASIITL. Residues 2014–2025 form a helical membrane-spanning segment; it reads LLPILIFLWAML. Residues 2026 to 2031 lie on the Cytoplasmic side of the membrane; that stretch reads SVPRPS. A helical transmembrane segment spans residues 2032 to 2053; sequence RRFWMMAIVYTEVAIVVKYFFQ. Residues 2054–2086 are Extracellular-facing; it reads FGFFPWNKDLEIYKERPYFPPNIIGVEKKEGYV. A helical membrane pass occupies residues 2087-2105; the sequence is LYDLIQLLALFFHRSILKC. Residues 2106 to 2259 are Cytoplasmic-facing; that stretch reads HGLWDEDDIV…HPDYSAVTDV (154 aa). Disordered regions lie at residues 2120-2139 and 2164-2205; these read DKEG…GSSD and IRRK…SVLS. Positions 2170 to 2197 are enriched in low complexity; sequence CSSSQISPRSSFSSNRSKRGSTSTRNSS. The chain crosses the membrane as a helical span at residues 2260–2279; sequence YVLMFLADTVDFIIIVFGFW. The Extracellular segment spans residues 2280 to 2301; sequence AFGKHSAAADITSSLSEDQVPG. A helical membrane pass occupies residues 2302–2322; sequence PFLVMVLIQFGTMVVDRALYL. At 2323 to 2326 the chain is on the cytoplasmic side; the sequence is RKTV. Residues 2327–2350 form a helical membrane-spanning segment; sequence LGKVIFQVILVFGIHFWMFFILPG. The Extracellular segment spans residues 2351-2359; the sequence is VTERKFSQN. Residues 2360–2382 traverse the membrane as a helical segment; sequence LVAQLWYFVKCVYFGLSAYQIRC. Residues 2383–2467 lie on the Cytoplasmic side of the membrane; that stretch reads GYPTRVLGNF…YPQPRGQKKK (85 aa). The helical transmembrane segment at 2468 to 2491 threads the bilayer; it reads KAVKYGMGGMIIVLLICIVWFPLL. Topologically, residues 2492–2739 are extracellular; the sequence is FMSLIKSVAG…PSLGFLAGYG (248 aa). A glycan (N-linked (GlcNAc...) asparagine) is linked at Asn-2692. Residues 2740–2760 traverse the membrane as a helical segment; sequence IMGLYASVVLVIGKFVREFFS. Residues 2761-2822 are Cytoplasmic-facing; sequence GISHSIMFEE…MIKWTREKTN (62 aa).

The protein belongs to the PIEZO (TC 1.A.75) family. In terms of assembly, homotrimer; the homotrimer forms a propeller-shaped Piezo channel with a cation-ion conducting pore. Heterotrimeric interaction may occur between PIEZO1 and PIEZO2. Interacts with STOM13. Interacts with TMC7; the interaction inhibits PIEZO2-conducted mechanically activated currents. Interacts with TMC1; the interaction may be part of the MET complex. Interacts with MDFIC (via C-terminus); the interaction prolongs Piezo channel inactivation. Interacts with MDFI (via C-terminus); the interaction prolongs Piezo channel inactivation. As to expression, expressed in bladder, colon, and lung, but less abundant in kidney or skin. Strong expression is observed in dorsal root ganglia (DRG) sensory neurons. Expressed in a wide range of cutaneous low-threshold mechanoreceptors (LTMRs), including Merkel cells and Meissner's corpuscles. Expressed in sensory neurons. Expressed in cochlear inner and outer hair cells and vestibular organ hair cells. Expressed in pulmonary neuroepithelial cell bodies. Expressed in bladder urothelium and sensory neurons of the lower urinary tract. Expressed in sensory endings of proprioceptors innervating muscle spindles and Golgi tendon organs.

It localises to the cell membrane. The catalysed reaction is Ca(2+)(in) = Ca(2+)(out). Its activity is regulated as follows. Regulated by auxillary subunits MDFIC and MDFI. Channel activity is inhibited by TMEM120aa. Phosphatidic acid and lysophosphatidic acid inhibit Piezo2 channel activity. Pore-forming subunit of the mechanosensitive non-specific cation Piezo channel required for rapidly adapting mechanically activated (MA) currents and has a key role in sensing touch and tactile pain. Piezo channels are homotrimeric three-blade propeller-shaped structures that utilize a cap-motion and plug-and-latch mechanism to gate their ion-conducting pathways. Expressed in sensory neurons, is essential for diverse physiological processes, including respiratory control, systemic metabolism, urinary function, and proprioception. Mediates airway stretch sensing, enabling efficient respiration at birth and maintaining normal breathing in adults. It regulates brown and beige adipose tissue morphology and function, preventing systemic hypermetabolism. In the lower urinary tract, acts as a sensor in both the bladder urothelium and innervating sensory neurons and is required for bladder-stretch sensing and urethral micturition reflexes, ensuring proper urinary function. Additionally, Piezo2 serves as the principal mechanotransducer in proprioceptors, facilitating proprioception and coordinated body movements. In inner ear hair cells, PIEZO1/2 subunits may constitute part of the mechanotransducer (MET) non-selective cation channel complex where they may act as pore-forming ion-conducting component in the complex. Required for Merkel-cell mechanotransduction. Plays a major role in light-touch mechanosensation. This Mus musculus (Mouse) protein is Piezo-type mechanosensitive ion channel component 2.